A 311-amino-acid chain; its full sequence is Malate dehydrogenase (311 aa).

NAD(+) contacts are provided by residues 7-13 and Asp34; that span reads GAAGGIG. 2 residues coordinate substrate: Arg81 and Arg87. NAD(+)-binding positions include Asn94 and 117-119; that span reads ITN. Substrate contacts are provided by Asn119 and Arg153. Catalysis depends on His177, which acts as the Proton acceptor. Residue Met227 participates in NAD(+) binding.

Belongs to the LDH/MDH superfamily. MDH type 1 family. Homodimer.

The enzyme catalyses (S)-malate + NAD(+) = oxaloacetate + NADH + H(+). Its function is as follows. Catalyzes the reversible oxidation of malate to oxaloacetate. This Vibrio atlanticus (strain LGP32) (Vibrio splendidus (strain Mel32)) protein is Malate dehydrogenase.